We begin with the raw amino-acid sequence, 459 residues long: Argininosuccinate lyase (459 aa).

The protein belongs to the lyase 1 family. Argininosuccinate lyase subfamily.

The protein resides in the cytoplasm. The enzyme catalyses 2-(N(omega)-L-arginino)succinate = fumarate + L-arginine. It participates in amino-acid biosynthesis; L-arginine biosynthesis; L-arginine from L-ornithine and carbamoyl phosphate: step 3/3. This Buchnera aphidicola subsp. Schizaphis graminum (strain Sg) protein is Argininosuccinate lyase.